Here is a 707-residue protein sequence, read N- to C-terminus: Choline transporter-like protein 4 (707 aa).

The Cytoplasmic segment spans residues Met-1–Asp-32. A helical transmembrane segment spans residues Ile-33–Ala-53. Residues Trp-54–Trp-227 lie on the Extracellular side of the membrane. N-linked (GlcNAc...) asparagine glycosylation is found at Asn-67, Asn-185, Asn-195, and Asn-196. A helical transmembrane segment spans residues Tyr-228–Leu-248. The Cytoplasmic portion of the chain corresponds to Arg-249–Leu-250. Residues Val-251–Ile-271 form a helical membrane-spanning segment. The Extracellular segment spans residues Tyr-272–Trp-307. An N-linked (GlcNAc...) asparagine glycan is attached at Asn-296. Residues Leu-308–Leu-328 form a helical membrane-spanning segment. Residues Arg-329 to Pro-356 lie on the Cytoplasmic side of the membrane. A helical membrane pass occupies residues Leu-357–Leu-377. Over Ala-378–Asn-452 the chain is Extracellular. N-linked (GlcNAc...) asparagine glycans are attached at residues Asn-391, Asn-403, and Asn-413. A helical membrane pass occupies residues Trp-453–Phe-473. Residues His-474–Ser-498 lie on the Cytoplasmic side of the membrane. The helical transmembrane segment at Leu-499 to Ile-519 threads the bilayer. The Extracellular segment spans residues Asp-520–Tyr-557. A helical transmembrane segment spans residues Ile-558 to Leu-578. The Cytoplasmic portion of the chain corresponds to Met-579 to Leu-594. Residues Leu-595–Phe-615 form a helical membrane-spanning segment. Topologically, residues Ser-616–Trp-635 are extracellular. The helical transmembrane segment at Leu-636–Phe-656 threads the bilayer. At Gly-657–Lys-707 the chain is on the cytoplasmic side.

This sequence belongs to the CTL (choline transporter-like) family. N-glycosylated; N-glycosylation of Asn-67 and Asn-391 is required for a proper thiamine pyrophosphate uptake. In terms of tissue distribution, expressed in colon and cecum.

Its subcellular location is the membrane. The protein resides in the apical cell membrane. It catalyses the reaction choline(out) + n H(+)(in) = choline(in) + n H(+)(out). It carries out the reaction thiamine diphosphate(out) = thiamine diphosphate(in). Choline transporter that plays a role in the choline-acetylcholine system and is required to the efferent innervation of hair cells in the olivocochlear bundle for the maintenance of physiological function of outer hair cells and the protection of hair cells from acoustic injury. Also described as a thiamine pyrophosphate transporter in colon, may mediate the absorption of microbiota-generated thiamine pyrophosphate and contribute to host thiamine (vitamin B1) homeostasis. The sequence is that of Choline transporter-like protein 4 from Mus musculus (Mouse).